The chain runs to 432 residues: Serine--tRNA ligase (432 aa).

238-240 (TAE) is a binding site for L-serine. 269–271 (RSE) contacts ATP. Glu-292 provides a ligand contact to L-serine. 357 to 360 (EISS) contacts ATP. Residue Ser-393 participates in L-serine binding.

The protein belongs to the class-II aminoacyl-tRNA synthetase family. Type-1 seryl-tRNA synthetase subfamily. As to quaternary structure, homodimer. The tRNA molecule binds across the dimer.

It localises to the cytoplasm. It catalyses the reaction tRNA(Ser) + L-serine + ATP = L-seryl-tRNA(Ser) + AMP + diphosphate + H(+). It carries out the reaction tRNA(Sec) + L-serine + ATP = L-seryl-tRNA(Sec) + AMP + diphosphate + H(+). It participates in aminoacyl-tRNA biosynthesis; selenocysteinyl-tRNA(Sec) biosynthesis; L-seryl-tRNA(Sec) from L-serine and tRNA(Sec): step 1/1. In terms of biological role, catalyzes the attachment of serine to tRNA(Ser). Is also able to aminoacylate tRNA(Sec) with serine, to form the misacylated tRNA L-seryl-tRNA(Sec), which will be further converted into selenocysteinyl-tRNA(Sec). This chain is Serine--tRNA ligase, found in Hyphomonas neptunium (strain ATCC 15444).